A 179-amino-acid polypeptide reads, in one-letter code: Crossover junction endodeoxyribonuclease RuvC (179 aa).

Residues aspartate 7, glutamate 67, and aspartate 140 contribute to the active site. Residues aspartate 7, glutamate 67, and aspartate 140 each coordinate Mg(2+).

The protein belongs to the RuvC family. In terms of assembly, homodimer which binds Holliday junction (HJ) DNA. The HJ becomes 2-fold symmetrical on binding to RuvC with unstacked arms; it has a different conformation from HJ DNA in complex with RuvA. In the full resolvosome a probable DNA-RuvA(4)-RuvB(12)-RuvC(2) complex forms which resolves the HJ. It depends on Mg(2+) as a cofactor.

The protein resides in the cytoplasm. It carries out the reaction Endonucleolytic cleavage at a junction such as a reciprocal single-stranded crossover between two homologous DNA duplexes (Holliday junction).. In terms of biological role, the RuvA-RuvB-RuvC complex processes Holliday junction (HJ) DNA during genetic recombination and DNA repair. Endonuclease that resolves HJ intermediates. Cleaves cruciform DNA by making single-stranded nicks across the HJ at symmetrical positions within the homologous arms, yielding a 5'-phosphate and a 3'-hydroxyl group; requires a central core of homology in the junction. The consensus cleavage sequence is 5'-(A/T)TT(C/G)-3'. Cleavage occurs on the 3'-side of the TT dinucleotide at the point of strand exchange. HJ branch migration catalyzed by RuvA-RuvB allows RuvC to scan DNA until it finds its consensus sequence, where it cleaves and resolves the cruciform DNA. This Salinibacter ruber (strain DSM 13855 / M31) protein is Crossover junction endodeoxyribonuclease RuvC.